Reading from the N-terminus, the 347-residue chain is Protein RecA (347 aa).

65 to 72 contributes to the ATP binding site; it reads GPESSGKT. Basic and acidic residues predominate over residues 327-336; that stretch reads KFEPTELSRE. Positions 327–347 are disordered; it reads KFEPTELSREEGDEDTLEDAM. The segment covering 337-347 has biased composition (acidic residues); the sequence is EGDEDTLEDAM.

Belongs to the RecA family.

It localises to the cytoplasm. Functionally, can catalyze the hydrolysis of ATP in the presence of single-stranded DNA, the ATP-dependent uptake of single-stranded DNA by duplex DNA, and the ATP-dependent hybridization of homologous single-stranded DNAs. It interacts with LexA causing its activation and leading to its autocatalytic cleavage. This is Protein RecA from Xylella fastidiosa (strain M23).